The primary structure comprises 222 residues: Glutathione S-transferase U21 (222 aa).

Residues 3 to 83 form the GST N-terminal domain; sequence AEVILLGFWP…YIDEVWSDNN (81 aa). Residues 13–14, 40–41, 54–55, and 67–68 contribute to the glutathione site; these read SM, NK, TI, and ES. In terms of domain architecture, GST C-terminal spans 89 to 211; it reads DPYHRAQALF…LPDSEKVVGY (123 aa).

It belongs to the GST superfamily. Tau family.

It localises to the cytoplasm. The protein localises to the cytosol. It catalyses the reaction RX + glutathione = an S-substituted glutathione + a halide anion + H(+). Functionally, may be involved in the conjugation of reduced glutathione to a wide number of exogenous and endogenous hydrophobic electrophiles and have a detoxification role against certain herbicides. In Arabidopsis thaliana (Mouse-ear cress), this protein is Glutathione S-transferase U21 (GSTU21).